We begin with the raw amino-acid sequence, 180 residues long: ATP synthase subunit b 2 (180 aa).

The chain crosses the membrane as a helical span at residues I33–P53.

It belongs to the ATPase B chain family. As to quaternary structure, F-type ATPases have 2 components, F(1) - the catalytic core - and F(0) - the membrane proton channel. F(1) has five subunits: alpha(3), beta(3), gamma(1), delta(1), epsilon(1). F(0) has three main subunits: a(1), b(2) and c(10-14). The alpha and beta chains form an alternating ring which encloses part of the gamma chain. F(1) is attached to F(0) by a central stalk formed by the gamma and epsilon chains, while a peripheral stalk is formed by the delta and b chains.

The protein localises to the cell inner membrane. Functionally, f(1)F(0) ATP synthase produces ATP from ADP in the presence of a proton or sodium gradient. F-type ATPases consist of two structural domains, F(1) containing the extramembraneous catalytic core and F(0) containing the membrane proton channel, linked together by a central stalk and a peripheral stalk. During catalysis, ATP synthesis in the catalytic domain of F(1) is coupled via a rotary mechanism of the central stalk subunits to proton translocation. Its function is as follows. Component of the F(0) channel, it forms part of the peripheral stalk, linking F(1) to F(0). The b'-subunit is a diverged and duplicated form of b found in plants and photosynthetic bacteria. In Cereibacter sphaeroides (strain ATCC 17025 / ATH 2.4.3) (Rhodobacter sphaeroides), this protein is ATP synthase subunit b 2 (atpF2).